A 610-amino-acid polypeptide reads, in one-letter code: Sensor protein kinase WalK (610 aa).

2 helical membrane passes run 14 to 34 (LVIVYVLLIIIGMQIIGLYFT) and 184 to 204 (IFIVGTGISLLITVILGFFIA). The HAMP domain occupies 205–257 (RTITKPITDMRNQTVEMSKGNYTQRVKIYGNDEIGELALAFNNLSKRVQEAQA). The PAS domain maps to 262–333 (EKRRLDSVIT…IQENNDSFLL (72 aa)). Residues 326-379 (ENNDSFLLDINENEGIIARVNFSTIVQETGFVTGYIAVLHDVTEQQQVERERRE) form the PAC domain. One can recognise a Histidine kinase domain in the interval 383-601 (NVSHELRTPL…SIFITLPCEV (219 aa)). The residue at position 386 (histidine 386) is a Phosphohistidine; by autocatalysis.

Autophosphorylated.

The protein localises to the cell membrane. The catalysed reaction is ATP + protein L-histidine = ADP + protein N-phospho-L-histidine.. Member of the two-component regulatory system WalK/WalR. WalK functions as a sensor protein kinase which is autophosphorylated at a histidine residue and transfers its phosphate group to WalR. This is Sensor protein kinase WalK (walK) from Staphylococcus saprophyticus subsp. saprophyticus (strain ATCC 15305 / DSM 20229 / NCIMB 8711 / NCTC 7292 / S-41).